The primary structure comprises 468 residues: Chromosomal replication initiator protein DnaA (468 aa).

The domain I, interacts with DnaA modulators stretch occupies residues 1-90 (MTQEKWGLLC…NSPMRPARAA (90 aa)). The interval 91–126 (RPAAAAAAAAAAVEAPQVSAPRATDTSDVLDGLQAA) is domain II. The interval 127-348 (PLDPRFTFDS…GALTRLFAFA (222 aa)) is domain III, AAA+ region. 4 residues coordinate ATP: Gly-171, Gly-173, Lys-174, and Thr-175. The interval 349 to 468 (SLVGREIDME…VEMLRRALEA (120 aa)) is domain IV, binds dsDNA.

Belongs to the DnaA family. In terms of assembly, oligomerizes as a right-handed, spiral filament on DNA at oriC.

Its subcellular location is the cytoplasm. In terms of biological role, plays an essential role in the initiation and regulation of chromosomal replication. ATP-DnaA binds to the origin of replication (oriC) to initiate formation of the DNA replication initiation complex once per cell cycle. Binds the DnaA box (a 9 base pair repeat at the origin) and separates the double-stranded (ds)DNA. Forms a right-handed helical filament on oriC DNA; dsDNA binds to the exterior of the filament while single-stranded (ss)DNA is stabiized in the filament's interior. The ATP-DnaA-oriC complex binds and stabilizes one strand of the AT-rich DNA unwinding element (DUE), permitting loading of DNA polymerase. After initiation quickly degrades to an ADP-DnaA complex that is not apt for DNA replication. Binds acidic phospholipids. This chain is Chromosomal replication initiator protein DnaA, found in Ruegeria pomeroyi (strain ATCC 700808 / DSM 15171 / DSS-3) (Silicibacter pomeroyi).